Reading from the N-terminus, the 461-residue chain is Deoxyguanosinetriphosphate triphosphohydrolase-like protein (461 aa).

Residues 22 to 41 (ERFLPDPPREKDNRPPFRRD) are disordered. The segment covering 24-41 (FLPDPPREKDNRPPFRRD) has biased composition (basic and acidic residues). Residues 72–285 (RLTHSLEVAQ…MELADDIAYG (214 aa)) form the HD domain.

It belongs to the dGTPase family. Type 2 subfamily.

This Haemophilus influenzae (strain PittGG) protein is Deoxyguanosinetriphosphate triphosphohydrolase-like protein.